Here is a 451-residue protein sequence, read N- to C-terminus: MKLKYFGTDGVRGVANQDLSPELAFRVGRAGGYVLTRHSERKQPQVLVARDTRISGEMLENALIAGLLSVGIEVLRLGVVTTPGVAYLVRAQEADAGVMITASHNPIKYNGIKYFGGNGFKLSDELEYEIEQLLDAEEDTLPRPSDAGLGTVADYHEGALKYTSFLEQTVSSDLEGLKVVVDAANGATSGFISNLFADMNVDFIPINDQPDGLNTNLNCGSTHPESLQKAVVENNADLGVAFDGDGDRCIAVDNEGNIVDGDKIMYICGKYMDKKGLLKKDTVVTTVMSNLGMYKALEAHNLKSVKTKVGDRYVVEEMLKNGYNLGGEQSGHIIFLDHNTTGDGMLTALQLLSVVKDSGKTLAELANDVTTYPQELLNIKVADKTTAMENQKLKEIIAQVEKEMNGDGRVLVRPSGTEPLLRIMAEAATPELVHEYVERIGDVARAELEVE.

The active-site Phosphoserine intermediate is Ser-103. Mg(2+) is bound by residues Ser-103, Asp-243, Asp-245, and Asp-247. Residue Ser-103 is modified to Phosphoserine.

It belongs to the phosphohexose mutase family. Requires Mg(2+) as cofactor. Post-translationally, activated by phosphorylation.

It catalyses the reaction alpha-D-glucosamine 1-phosphate = D-glucosamine 6-phosphate. Functionally, catalyzes the conversion of glucosamine-6-phosphate to glucosamine-1-phosphate. This chain is Phosphoglucosamine mutase, found in Limosilactobacillus reuteri subsp. reuteri (strain JCM 1112) (Lactobacillus reuteri).